The primary structure comprises 232 residues: Ion-translocating oxidoreductase complex subunit E (232 aa).

Helical transmembrane passes span 12–31, 39–59, 69–89, 92–112, 125–145, and 182–202; these read LWRN…LLAV, LGLG…VSAL, IPIY…LINA, FGLY…CIVI, ALAA…LLLL, and PFLL…MLVG.

It belongs to the NqrDE/RnfAE family. The complex is composed of six subunits: RnfA, RnfB, RnfC, RnfD, RnfE and RnfG.

It is found in the cell inner membrane. Part of a membrane-bound complex that couples electron transfer with translocation of ions across the membrane. In Sodalis glossinidius (strain morsitans), this protein is Ion-translocating oxidoreductase complex subunit E.